The following is a 114-amino-acid chain: Protein preY, mitochondrial (114 aa).

Residues 1-35 (MLSGARCRLASALRGTRAPPSAVARRCLHASGSRP) constitute a mitochondrion transit peptide. The tract at residues 14–49 (RGTRAPPSAVARRCLHASGSRPLADRGKKTEEPPRD) is disordered. The span at 36 to 49 (LADRGKKTEEPPRD) shows a compositional bias: basic and acidic residues. Residues 51–97 (DPALLEFLVCPLSKKPLRYEASTNELINEELGIAYPIIDGIPNMIPQ) form the TRM112 domain.

The protein belongs to the PREY family. Interacts (via TRM112 domain) with NDUFAF5; the interaction is direct and stabilizes NDUFAF5 protein. Interacts with COQ5; the interaction is direct, stabilizes COQ5 protein and associates PYURF with COQ enzyme complex.

The protein resides in the mitochondrion. In mitochondria, S-adenosylmethionine-dependent methyltransferase chaperone that supports both coenzyme Q biosynthesis, by stabilizing its components, such as COQ5, and NADH:ubiquinone oxidoreductase complex (complex I, MT-ND1) assembly, by stabilizing complex I assembly factors, such as NDUFAF5. The polypeptide is Protein preY, mitochondrial (Homo sapiens (Human)).